The chain runs to 434 residues: Beta-phenylalanine transaminase (434 aa).

Arg-41 serves as a coordination point for (S)-3-amino-3-phenylpropanoate. Residue 132-133 (GT) coordinates pyridoxal 5'-phosphate. Residue Lys-267 is modified to N6-(pyridoxal phosphate)lysine. Residue Thr-300 participates in pyridoxal 5'-phosphate binding.

This sequence belongs to the class-III pyridoxal-phosphate-dependent aminotransferase family. Homodimer. It depends on pyridoxal 5'-phosphate as a cofactor.

It carries out the reaction (S)-3-amino-3-phenylpropanoate + 2-oxoglutarate = 3-oxo-3-phenylpropanoate + L-glutamate. It catalyses the reaction (S)-3-amino-3-phenylpropanoate + pyruvate = 3-oxo-3-phenylpropanoate + L-alanine. With respect to regulation, is inhibited by 2-aminooxyacetate (AOA), a mimic of beta-alanine and a known inhibitor of aminotransferases. Its function is as follows. Aminotransferase that acts exclusively on beta-amino acids and exhibits a broad substrate range in vitro, accepting meta-, para- and, to a lesser extent, ortho-substituted beta-phenylalanine derivatives as amino donors, and 2-oxoglutarate or pyruvate as amino acceptors. Is highly enantioselective toward (S)-beta-phenylalanine (is not active with (R)-beta-phenylalanine) and derivatives with different substituents on the phenyl ring, allowing the kinetic resolution of various racemic beta-amino acids to yield (R)-beta-amino acids with &gt;95% enantiomeric excess (ee). Highly prefers aromatic beta-amino acids over aliphatic beta-amino acids; cannot use beta-alanine or beta-glutamate as substrate. Is likely involved in the beta-phenylalanine degradation pathway that allows V.paradoxus strain CBF3 to use beta-phenylalanine as a sole nitrogen source. The protein is Beta-phenylalanine transaminase of Variovorax paradoxus.